Consider the following 25-residue polypeptide: Bifunctional chitinase/lysozyme (25 aa).

Belongs to the glycosyl hydrolase 19 family. Chitinase class I subfamily. In terms of assembly, monomer.

The protein localises to the secreted. Its subcellular location is the extracellular space. The catalysed reaction is Random endo-hydrolysis of N-acetyl-beta-D-glucosaminide (1-&gt;4)-beta-linkages in chitin and chitodextrins.. It carries out the reaction Hydrolysis of (1-&gt;4)-beta-linkages between N-acetylmuramic acid and N-acetyl-D-glucosamine residues in a peptidoglycan and between N-acetyl-D-glucosamine residues in chitodextrins.. Bifunctional enzyme with lysozyme/chitinase activity. This is Bifunctional chitinase/lysozyme from Carica papaya (Papaya).